Here is a 493-residue protein sequence, read N- to C-terminus: Glutamyl-tRNA(Gln) amidotransferase subunit A (493 aa).

Active-site charge relay system residues include Lys79 and Ser159. The active-site Acyl-ester intermediate is Ser183.

This sequence belongs to the amidase family. GatA subfamily. Heterotrimer of A, B and C subunits.

The enzyme catalyses L-glutamyl-tRNA(Gln) + L-glutamine + ATP + H2O = L-glutaminyl-tRNA(Gln) + L-glutamate + ADP + phosphate + H(+). In terms of biological role, allows the formation of correctly charged Gln-tRNA(Gln) through the transamidation of misacylated Glu-tRNA(Gln) in organisms which lack glutaminyl-tRNA synthetase. The reaction takes place in the presence of glutamine and ATP through an activated gamma-phospho-Glu-tRNA(Gln). This chain is Glutamyl-tRNA(Gln) amidotransferase subunit A, found in Allorhizobium ampelinum (strain ATCC BAA-846 / DSM 112012 / S4) (Agrobacterium vitis (strain S4)).